We begin with the raw amino-acid sequence, 327 residues long: Malate dehydrogenase (327 aa).

12-18 (GAAGQIG) is an NAD(+) binding site. Residues R93 and R99 each contribute to the substrate site. Residues N106, Q113, and 130–132 (VGN) contribute to the NAD(+) site. Substrate-binding residues include N132 and R163. Catalysis depends on H188, which acts as the Proton acceptor.

Belongs to the LDH/MDH superfamily. MDH type 2 family.

It carries out the reaction (S)-malate + NAD(+) = oxaloacetate + NADH + H(+). Functionally, catalyzes the reversible oxidation of malate to oxaloacetate. The polypeptide is Malate dehydrogenase (Cupriavidus necator (strain ATCC 17699 / DSM 428 / KCTC 22496 / NCIMB 10442 / H16 / Stanier 337) (Ralstonia eutropha)).